A 161-amino-acid chain; its full sequence is Protein-export protein SecB (161 aa).

This sequence belongs to the SecB family. As to quaternary structure, homotetramer, a dimer of dimers. One homotetramer interacts with 1 SecA dimer.

It localises to the cytoplasm. Functionally, one of the proteins required for the normal export of preproteins out of the cell cytoplasm. It is a molecular chaperone that binds to a subset of precursor proteins, maintaining them in a translocation-competent state. It also specifically binds to its receptor SecA. The protein is Protein-export protein SecB of Shewanella sp. (strain ANA-3).